The primary structure comprises 156 residues: Peroxisome assembly protein 22 (156 aa).

The chain crosses the membrane as a helical span at residues 24 to 46 (LSIIAVGVLSTVAVTVGYLLYLY).

It belongs to the peroxin-22 family.

The protein resides in the peroxisome membrane. Functionally, involved in peroxisome biogenesis. This is Peroxisome assembly protein 22 (PEX22) from Kluyveromyces lactis (strain ATCC 8585 / CBS 2359 / DSM 70799 / NBRC 1267 / NRRL Y-1140 / WM37) (Yeast).